Reading from the N-terminus, the 133-residue chain is Oocytes ribonuclease (133 aa).

Residues Met1–Ser22 form the signal peptide. Pyrrolidone carboxylic acid is present on Gln23. The Proton acceptor role is filled by His32. 4 disulfide bridges follow: Cys41/Cys93, Cys56/Cys103, Cys74/Cys118, and Cys115/Cys132. Lys57–Thr61 is a substrate binding site. The active-site Proton donor is the His125.

Belongs to the pancreatic ribonuclease family. Monomer.

It is found in the secreted. Functionally, preferentially cleaves single-stranded RNA at pyrimidine residues with a 3'flanking guanine. Hydrolyzes poly(U) and poly(C) as substrates, and prefers the former. The S-lectins in frog eggs may be involved in the fertilization and development of the frog embryo. This lectin agglutinates various animal cells, including normal lymphocytes, erythrocytes, and fibroblasts of animal and human origin. It is cytotoxic against several tumor cells. The chain is Oocytes ribonuclease (RCR) from Aquarana catesbeiana (American bullfrog).